The chain runs to 613 residues: Proteasome-associated ATPase (613 aa).

Residues 1 to 29 (MSESERSEGFPEGFAGAGSGSLSSEDAAE) form a disordered region. Residues 23-100 (SSEDAAELEA…LREEVDRLGQ (78 aa)) are a coiled coil. 300-305 (GCGKTL) lines the ATP pocket. Lysine 595 is covalently cross-linked (Isoglutamyl lysine isopeptide (Lys-Gln) (interchain with Q-Cter in protein Pup)). The interval 612-613 (YL) is docks into pockets in the proteasome alpha-ring.

The protein belongs to the AAA ATPase family. Homohexamer. Assembles into a hexameric ring structure that caps the 20S proteasome core. Strongly interacts with the prokaryotic ubiquitin-like protein Pup through a hydrophobic interface; the interacting region of ARC lies in its N-terminal coiled-coil domain. There is one Pup binding site per ARC hexamer ring. Upon ATP-binding, the C-terminus of ARC interacts with the alpha-rings of the proteasome core, possibly by binding to the intersubunit pockets.

The protein operates within protein degradation; proteasomal Pup-dependent pathway. Its function is as follows. ATPase which is responsible for recognizing, binding, unfolding and translocation of pupylated proteins into the bacterial 20S proteasome core particle. May be essential for opening the gate of the 20S proteasome via an interaction with its C-terminus, thereby allowing substrate entry and access to the site of proteolysis. Thus, the C-termini of the proteasomal ATPase may function like a 'key in a lock' to induce gate opening and therefore regulate proteolysis. The sequence is that of Proteasome-associated ATPase from Mycolicibacterium smegmatis (strain ATCC 700084 / mc(2)155) (Mycobacterium smegmatis).